The chain runs to 543 residues: Hydroxylamine reductase (543 aa).

[4Fe-4S] cluster contacts are provided by C3, C6, C15, and C21. Hybrid [4Fe-2O-2S] cluster is bound by residues H239, E263, C307, C398, C426, C451, E486, and K488. C398 is subject to Cysteine persulfide.

This sequence belongs to the HCP family. Requires [4Fe-4S] cluster as cofactor. The cofactor is hybrid [4Fe-2O-2S] cluster.

It localises to the cytoplasm. The enzyme catalyses A + NH4(+) + H2O = hydroxylamine + AH2 + H(+). Functionally, catalyzes the reduction of hydroxylamine to form NH(3) and H(2)O. This Methanococcus vannielii (strain ATCC 35089 / DSM 1224 / JCM 13029 / OCM 148 / SB) protein is Hydroxylamine reductase.